Consider the following 32-residue polypeptide: Chlorophyll a-b binding protein 2, chloroplastic (32 aa).

The chlorophyll a site is built by Glu-19 and His-22. Position 24 (Arg-24) interacts with chlorophyll b.

The protein belongs to the light-harvesting chlorophyll a/b-binding (LHC) protein family. In terms of assembly, the LHC complex consists of chlorophyll a-b binding proteins. The cofactor is Binds at least 14 chlorophylls (8 Chl-a and 6 Chl-b) and carotenoids such as lutein and neoxanthin.. Photoregulated by reversible phosphorylation of its threonine residues.

It localises to the plastid. The protein resides in the chloroplast thylakoid membrane. In terms of biological role, the light-harvesting complex (LHC) functions as a light receptor, it captures and delivers excitation energy to photosystems with which it is closely associated. The protein is Chlorophyll a-b binding protein 2, chloroplastic of Populus euphratica (Euphrates poplar).